Consider the following 2185-residue polypeptide: MGAQVSTQKTGAHETGLRASGNSIIHYTNINYYKDAASNSANRQEFAQDPGKFTEPVKDIMIKSMPALNSPSAEECGYSDRVRSITLGNSTITTQECANVVVGYGTWPTYLKDEEATAEDQPTQPDVATCRFYTLESVMWQQSSPGWWWKFPDALSNMGLFGQNMQYHYLGRAGYTVHVQCNASKFHQGCLLVVCVPEAEMGCATLANKPDQKSLSNGETANTFDSQNTTGQTAVQANVINAGMGVGVGNLTIFPHQWINLRTNNSATIVMPYINSVPMDNMFRHNNFTLMIIPFAPLSYSTGATTYVPITVTVAPMCAEYNGLRLAGKQGLPTMLTPGSNQFLTSDDFQSPSAMPQFDVTPEMAIPGQVNNLMEIAEVDSVVPVNNTEGKVSSIEAYQIPVQSNSTNGSQVFGFPLIPGASSVLNRTLLGEILNYYTHWSGSIKLTFMFCGSAMATGKFLLAYSPPGAGAPTTRKEAMLGTHVIWDVGLQSSCVLCIPWISQTHYRYVVVDEYTAGGYITCWYQTNIVVPADTQSDCKILCFVSACNDFSVRMLKDTPFIKQDSFYQGPPGEAVERAIARVADTISSGPVNSESIPALTAAETGHTSQVVPADTMQTRHVKNYHSRSESTVENFLCRSACVYYTTYKNHGTDGDNFAYWVINTRQVAQLRRKLEMFTYARFDLELTFVITSTQEQSTIQGQDSPVLTHQIMYVPPGGPVPTKINSYSWQTSTNPSVFWTEGSAPPRISIPFISIGNAYSMFYDGWAKFDKQGTYGINTLNNMGTLYMRHVNDGSPGPIVSTVRIYFKPKHVKTWVPRPPRLCQYQKAGNVNFEPTGVTESRTEITAMQTTGVLGQQTGAICIGNYRVVNRHLATSEDWQRCVWEDYNRDLLVSTTTAHGCDTIARCRCSTGVYFCASRNKHYPVSFEGPGLVEVQESEYYPKRYQSHVLLAAGFSEPGDCGGILRCEHGVIGLVTMGGEGVVGFADVRDLLWLEDDAMEQGVKDYVEQLGNAFGSGFTNQICEQVNLLKESLVGQDSILEKSLKALVKIISALVIVVRNHDDLVTITATLALIGCTSSPWRWLKQKVSQYYGIPMAERQNNNWLKKFTEMTNACKGMEWIAVKIQKFIDWLKVKILPEVKEKHEFLNRLKQLPLLESQIATIEQSAPSQSDQEQLFSNVQYFAHYCRKYAPLYAAEAKRVFSLEKKMSNYIQFKSKCRIEPVCLLLHGSPGAGKSVATNLIGRSLAEKLNSSVYSLPPDPDHFDGYKQQAVVIMDDLCQNPDGGDISLFCQMVSSVDFVPPMAALEEKGILFTSPFVLASTNAGSINAPTVSDSRALARRFHFDMNIEVISMYSQNGKINMPMSVRTCDEECCPVNFKRCCPLVCGKAIQFIDRRTQVRYSLDMLVTEMFREYNHRHSVGATLEALFQGPPIYREIKISVAPDTPPPPAIADLLKSVDSEAVREYCREKGWLVPEINSTLQIEKHVSRAFICLQALTTFVSVAGIIYIIYKLFAGFQGAYTGMPNQKPKVPTLRQAKVQGPAFEFAVAMMKRNSSTVKTEYGEFTMLGIYDRWAVLPRHAKPGPTILMNDQEVGVVDAKELVDKDGTNLELTLLKLSRNEKFRDIRGFLAKEEVEVNEAVLAINTSKFPNMYIPVGQVTDYGFLNLGGTPTKRMLMYNFPTRAGQCGGVLMSTGKVLGIHVGGNGHQGFSAALLKHYFNDEQGEIEFIESSKEAGLPVINTPSKTKLEPSVFHQVFEGNKEPAVLRNGDPRLKANFEEAIFSKYIGNVNTHVDEYMLEAVDHYAGQLATLDISTEPMKLEDAVYGTEGLEALDLTTSAGYPYVALGIKKRDILSKKTKDLTKLKECMDKYGLNLPMVTYVKDELRSAEKVAKGKSRLIEASSLNDSVAMRQTFGNLYKTFHLNPGIVTGSAVGCDPDLFWSKIPVLLDGHLIAFDYSGYDASLSPVWFACLKLLLEKLGYTHKETNYIDYLCNSHHLYRDKHYFVRGGMPSGCSGTSIFNSMINNIIIRTLMLKVYKGIDLDQFRMIAYGDDVIASYPWPIDASLLAEAGKDYGLIMTPADKGECFNEVTWTNVTFLKRYFRADEQYPFLVHPVMPMKDIHESIRWTKDPKNTQDHVRSLCLLAWHNGEHEYEEFIKKIRSVPVGRCLTLPAFSTLRRKWLDSF.

Residue Gly2 is the site of N-myristoyl glycine; by host attachment. At 2 to 1495 (GAQVSTQKTG…HVSRAFICLQ (1494 aa)) the chain is on the cytoplasmic side. Positions 566 to 582 (FYQGPPGEAVERAIARV) are amphipathic alpha-helix. Catalysis depends on for protease 2A activity residues His872 and Asp890. Residues Cys907 and Cys909 each coordinate Zn(2+). Residue Cys961 is the For protease 2A activity of the active site. Residues Cys967 and His969 each contribute to the Zn(2+) site. The tract at residues 1101–1173 (NNNWLKKFTE…EQSAPSQSDQ (73 aa)) is membrane-binding. An oligomerization region spans residues 1101–1239 (NNNWLKKFTE…SPGAGKSVAT (139 aa)). Residues 1122 to 1126 (AVKIQ) form an RNA-binding region. The SF3 helicase domain maps to 1205–1361 (EKKMSNYIQF…SMYSQNGKIN (157 aa)). Zn(2+) contacts are provided by Cys1369, Cys1381, and Cys1386. The segment at 1369–1386 (CDEECCPVNFKRCCPLVC) adopts a C4-type; degenerate zinc-finger fold. Residues 1413–1420 (EYNHRHSV) form an RNA-binding region. The tract at residues 1424–1429 (LEALFQ) is oligomerization. Residues 1496–1511 (ALTTFVSVAGIIYIIY) lie within the membrane without spanning it. Residues 1512-2185 (KLFAGFQGAY…TLRRKWLDSF (674 aa)) lie on the Cytoplasmic side of the membrane. O-(5'-phospho-RNA)-tyrosine is present on Tyr1521. The 179-residue stretch at 1541–1719 (GPAFEFAVAM…FSAALLKHYF (179 aa)) folds into the Peptidase C3 domain. Residues His1580, Glu1611, and Cys1687 each act as for protease 3C activity in the active site. In terms of domain architecture, RdRp catalytic spans 1950 to 2066 (GHLIAFDYSG…SYPWPIDASL (117 aa)). The Mg(2+) site is built by Asp1956 and Asp2052.

This sequence belongs to the picornaviruses polyprotein family. In terms of assembly, interacts with capsid protein VP1 and capsid protein VP3 to form heterotrimeric protomers. As to quaternary structure, interacts with capsid protein VP0, and capsid protein VP3 to form heterotrimeric protomers. Five protomers subsequently associate to form pentamers which serve as building blocks for the capsid. Interacts with capsid protein VP2, capsid protein VP3 and capsid protein VP4 following cleavage of capsid protein VP0. Interacts with capsid protein VP1 and capsid protein VP3 in the mature capsid. In terms of assembly, interacts with capsid protein VP0 and capsid protein VP1 to form heterotrimeric protomers. Five protomers subsequently associate to form pentamers which serve as building blocks for the capsid. Interacts with capsid protein VP4 in the mature capsid. Interacts with protein 2C; this interaction may be important for virion morphogenesis. As to quaternary structure, interacts with capsid protein VP1 and capsid protein VP3. Homodimer. In terms of assembly, homohexamer; forms a hexameric ring structure with 6-fold symmetry characteristic of AAA+ ATPases. Interacts (via N-terminus) with host RTN3 (via reticulon domain); this interaction is important for viral replication. Interacts with capsid protein VP3; this interaction may be important for virion morphogenesis. As to quaternary structure, interacts with protein 3CD. Homodimer. Interacts with host GBF1. Interacts (via GOLD domain) with host ACBD3 (via GOLD domain); this interaction allows the formation of a viral protein 3A/ACBD3 heterotetramer with a 2:2 stoichiometry, which will stimulate the recruitment of host PI4KB in order to synthesize PI4P at the viral RNA replication sites. In terms of assembly, interacts with RNA-directed RNA polymerase. As to quaternary structure, interacts with protein 3AB and with RNA-directed RNA polymerase. Interacts with Viral protein genome-linked and with protein 3CD. Mg(2+) is required as a cofactor. In terms of processing, specific enzymatic cleavages in vivo by the viral proteases yield processing intermediates and the mature proteins. Post-translationally, myristoylation is required for the formation of pentamers during virus assembly. Further assembly of 12 pentamers and a molecule of genomic RNA generates the provirion. During virion maturation, immature virions are rendered infectious following cleavage of VP0 into VP4 and VP2. This maturation seems to be an autocatalytic event triggered by the presence of RNA in the capsid and it is followed by a conformational change infectious virion. In terms of processing, myristoylation is required during RNA encapsidation and formation of the mature virus particle. Post-translationally, VPg is uridylylated by the polymerase into VPg-pUpU. This acts as a nucleotide-peptide primer for the genomic RNA replication.

The protein resides in the virion. It is found in the host cytoplasm. It localises to the host cytoplasmic vesicle membrane. The protein localises to the host nucleus. The enzyme catalyses a ribonucleoside 5'-triphosphate + H2O = a ribonucleoside 5'-diphosphate + phosphate + H(+). It carries out the reaction Selective cleavage of Tyr-|-Gly bond in the picornavirus polyprotein.. The catalysed reaction is RNA(n) + a ribonucleoside 5'-triphosphate = RNA(n+1) + diphosphate. It catalyses the reaction Selective cleavage of Gln-|-Gly bond in the poliovirus polyprotein. In other picornavirus reactions Glu may be substituted for Gln, and Ser or Thr for Gly.. With respect to regulation, replication or transcription is subject to high level of random mutations by the nucleotide analog ribavirin. Forms an icosahedral capsid of pseudo T=3 symmetry with capsid proteins VP2 and VP3. The capsid is 300 Angstroms in diameter, composed of 60 copies of each capsid protein and enclosing the viral positive strand RNA genome. Capsid protein VP1 mainly forms the vertices of the capsid. Capsid protein VP1 interacts with host cell receptor to provide virion attachment to target host cells. This attachment induces virion internalization. Tyrosine kinases are probably involved in the entry process. After binding to its receptor, the capsid undergoes conformational changes. Capsid protein VP1 N-terminus (that contains an amphipathic alpha-helix) and capsid protein VP4 are externalized. Together, they shape a pore in the host membrane through which viral genome is translocated to host cell cytoplasm. Functionally, forms an icosahedral capsid of pseudo T=3 symmetry with capsid proteins VP2 and VP3. The capsid is 300 Angstroms in diameter, composed of 60 copies of each capsid protein and enclosing the viral positive strand RNA genome. Its function is as follows. Lies on the inner surface of the capsid shell. After binding to the host receptor, the capsid undergoes conformational changes. Capsid protein VP4 is released, Capsid protein VP1 N-terminus is externalized, and together, they shape a pore in the host membrane through which the viral genome is translocated into the host cell cytoplasm. In terms of biological role, component of immature procapsids, which is cleaved into capsid proteins VP4 and VP2 after maturation. Allows the capsid to remain inactive before the maturation step. Cysteine protease that cleaves viral polyprotein and specific host proteins. It is responsible for the autocatalytic cleavage between the P1 and P2 regions, which is the first cleavage occurring in the polyprotein. Also cleaves the host translation initiation factor EIF4G1, in order to shut down the capped cellular mRNA translation. Inhibits the host nucleus-cytoplasm protein and RNA trafficking by cleaving host members of the nuclear pores. Counteracts stress granule formation probably by antagonizing its assembly or promoting its dissassembly. Cleaves and inhibits host IFIH1/MDA5, thereby inhibiting the type-I IFN production and the establishment of the antiviral state. Cleaves and inhibits host MAVS, thereby inhibiting the type-I IFN production and the establishment of the antiviral state. Functionally, plays an essential role in the virus replication cycle by acting as a viroporin. Creates a pore in the host endoplasmic reticulum and as a consequence releases Ca2+ in the cytoplasm of infected cell. In turn, high levels of cytoplasmic calcium may trigger membrane trafficking and transport of viral ER-associated proteins to viroplasms, sites of viral genome replication. Its function is as follows. Induces and associates with structural rearrangements of intracellular membranes. Displays RNA-binding, nucleotide binding and NTPase activities. May play a role in virion morphogenesis and viral RNA encapsidation by interacting with the capsid protein VP3. In terms of biological role, localizes the viral replication complex to the surface of membranous vesicles. Together with protein 3CD binds the Cis-Active RNA Element (CRE) which is involved in RNA synthesis initiation. Acts as a cofactor to stimulate the activity of 3D polymerase, maybe through a nucleid acid chaperone activity. Localizes the viral replication complex to the surface of membranous vesicles. It inhibits host cell endoplasmic reticulum-to-Golgi apparatus transport and causes the disassembly of the Golgi complex, possibly through GBF1 interaction. This would result in depletion of MHC, trail receptors and IFN receptors at the host cell surface. Plays an essential role in viral RNA replication by recruiting ACBD3 and PI4KB at the viral replication sites, thereby allowing the formation of the rearranged membranous structures where viral replication takes place. Functionally, acts as a primer for viral RNA replication and remains covalently bound to viral genomic RNA. VPg is uridylylated prior to priming replication into VPg-pUpU. The oriI viral genomic sequence may act as a template for this. The VPg-pUpU is then used as primer on the genomic RNA poly(A) by the RNA-dependent RNA polymerase to replicate the viral genome. During genome replication, the VPg-RNA linkage is removed by the host TDP2, thereby accelerating replication. During the late stage of the replication cycle, host TDP2 is excluded from sites of viral RNA synthesis and encapsidation, allowing for the generation of progeny virions. Its function is as follows. Involved in the viral replication complex and viral polypeptide maturation. It exhibits protease activity with a specificity and catalytic efficiency that is different from protease 3C. Protein 3CD lacks polymerase activity. Protein 3CD binds to the 5'UTR of the viral genome. In terms of biological role, replicates the viral genomic RNA on the surface of intracellular membranes. May form linear arrays of subunits that propagate along a strong head-to-tail interaction called interface-I. Covalently attaches UMP to a tyrosine of VPg, which is used to prime RNA synthesis. The positive stranded RNA genome is first replicated at virus induced membranous vesicles, creating a dsRNA genomic replication form. This dsRNA is then used as template to synthesize positive stranded RNA genomes. ss(+)RNA genomes are either translated, replicated or encapsidated. Major viral protease that mediates proteolytic processing of the polyprotein. Cleaves host EIF5B, contributing to host translation shutoff. Also cleaves host PABPC1, contributing to host translation shutoff. Cleaves host NLRP1, triggers host N-glycine-mediated degradation of the autoinhibitory NLRP1 N-terminal fragment. This Homo sapiens (Human) protein is Genome polyprotein.